Reading from the N-terminus, the 359-residue chain is Guanine nucleotide-binding protein G(q) subunit alpha (359 aa).

2 S-palmitoyl cysteine lipidation sites follow: Cys9 and Cys10. Residues 38–359 (RELKLLLLGT…QLNLKEYNLV (322 aa)) enclose the G-alpha domain. Residues 41–54 (KLLLLGTGESGKST) form a G1 motif region. Ser50, Gly51, Lys52, Ser53, Thr54, Ser156, Leu180, Arg181, and Arg183 together coordinate GTP. A Mg(2+)-binding site is contributed by Ser53. The interval 178–186 (DVLRVRVPT) is G2 motif. Thr186 provides a ligand contact to Mg(2+). Residues 201–210 (FRMVDVGGQR) are G3 motif. The residue at position 209 (Gln209) is a 5-glutamyl histamine. Positions 270 to 277 (ILFLNKKD) are G4 motif. 4 residues coordinate GTP: Asn274, Lys275, Asp277, and Ala331. A G5 motif region spans residues 329–334 (TCATDT).

Belongs to the G-alpha family. G(q) subfamily. In terms of assembly, g proteins are composed of 3 units; alpha, beta and gamma. The alpha chain contains the guanine nucleotide binding site. Interacts (GDP-bound form) with RIC8A (via C-terminus); promoting GNAQ folding and association with the plasma membrane. Binds NHERF1. Forms a complex with PECAM1 and BDKRB2. Interacts with GAS2L2. In terms of processing, palmitoylated by ZDHHC3 and ZDHHC7. Palmitoylation occurs in the Golgi and participates in the localization of GNAQ to the plasma membrane. Histaminylated at Gln-209 residues by TGM2.

The protein resides in the cell membrane. The protein localises to the golgi apparatus. Its subcellular location is the nucleus. It is found in the nucleus membrane. It carries out the reaction GTP + H2O = GDP + phosphate + H(+). Its function is as follows. Guanine nucleotide-binding proteins (G proteins) function as transducers downstream of G protein-coupled receptors (GPCRs) in numerous signaling cascades. The alpha chain contains the guanine nucleotide binding site and alternates between an active, GTP-bound state and an inactive, GDP-bound state. Signaling by an activated GPCR promotes GDP release and GTP binding. The alpha subunit has a low GTPase activity that converts bound GTP to GDP, thereby terminating the signal. Both GDP release and GTP hydrolysis are modulated by numerous regulatory proteins. Signaling is mediated via phospholipase C-beta-dependent inositol lipid hydrolysis for signal propagation: activates phospholipase C-beta: following GPCR activation, GNAQ activates PLC-beta (PLCB1, PLCB2, PLCB3 or PLCB4), leading to production of diacylglycerol (DAG) and inositol 1,4,5-trisphosphate (IP3). Required for platelet activation. Regulates B-cell selection and survival and is required to prevent B-cell-dependent autoimmunity. Regulates chemotaxis of BM-derived neutrophils and dendritic cells (in vitro). Transduces FFAR4 signaling in response to long-chain fatty acids (LCFAs). Together with GNA11, required for heart development. The chain is Guanine nucleotide-binding protein G(q) subunit alpha (GNAQ) from Canis lupus familiaris (Dog).